The sequence spans 216 residues: Cytidylate kinase (216 aa).

9-17 (GPAASGKGT) contacts ATP.

Belongs to the cytidylate kinase family. Type 1 subfamily.

The protein resides in the cytoplasm. It carries out the reaction CMP + ATP = CDP + ADP. The catalysed reaction is dCMP + ATP = dCDP + ADP. This is Cytidylate kinase from Caulobacter sp. (strain K31).